Consider the following 299-residue polypeptide: Ethylmalonyl-CoA decarboxylase (299 aa).

Lys209 is modified (N6-acetyllysine; alternate). N6-succinyllysine; alternate is present on Lys209. Lys293 is modified (N6-succinyllysine).

It belongs to the enoyl-CoA hydratase/isomerase family.

Its subcellular location is the cytoplasm. It localises to the cytosol. It catalyses the reaction (2S)-ethylmalonyl-CoA + H(+) = butanoyl-CoA + CO2. The enzyme catalyses (S)-methylmalonyl-CoA + H(+) = propanoyl-CoA + CO2. The catalysed reaction is (2R)-ethylmalonyl-CoA + H(+) = butanoyl-CoA + CO2. Its function is as follows. Decarboxylates ethylmalonyl-CoA, a potentially toxic metabolite, to form butyryl-CoA, suggesting it might be involved in metabolite proofreading. Acts preferentially on (S)-ethylmalonyl-CoA but also has some activity on the (R)-isomer. Also has methylmalonyl-CoA decarboxylase activity at lower level. This Rattus norvegicus (Rat) protein is Ethylmalonyl-CoA decarboxylase (Echdc1).